The sequence spans 102 residues: Putative lipid-transfer protein DIR1 (102 aa).

Residues 1 to 25 (MASKKAAMVMMAMIVIMAMLVDTSV) form the signal peptide. 4 disulfides stabilise this stretch: Cys30-Cys67, Cys40-Cys56, Cys57-Cys94, and Cys69-Cys102. A 1-acyl-sn-glycero-3-phosphocholine is bound at residue Gln34. Glu36 contributes to the Zn(2+) binding site. Asn38 lines the a 1-acyl-sn-glycero-3-phosphocholine pocket. Zn(2+) is bound at residue His62.

Belongs to the A9/FIL1 family. Self-interacts and binds to AZI1. Does not interact with PDLP1. It depends on Zn(2+) as a cofactor.

Its subcellular location is the secreted. It is found in the extracellular space. The protein localises to the apoplast. It localises to the endoplasmic reticulum. The protein resides in the cell junction. Its subcellular location is the plasmodesma. Putative lipid transfer protein required for systemic acquired resistance (SAR) long distance signaling. May interact with a lipid-derived molecule to promote long distance signaling associated with SAR. Together with AZI1, required for glycerol-3-phosphate- (G3P) and azelaic acid- (AA) induced systemic acquired resistance (SAR). Component of plant systemic immunity involved in priming defenses in a AA-dependent manner, by modulating production and/or translocation of a mobile signal(s) during SAR. Is able to bind with high affinity monoacylated phospholipids, mainly lysophosphatidylcholines. This is Putative lipid-transfer protein DIR1 (DIR1) from Arabidopsis thaliana (Mouse-ear cress).